Here is a 739-residue protein sequence, read N- to C-terminus: Tegument protein UL47 (739 aa).

Residues 1–13 are compositionally biased toward basic and acidic residues; it reads MDAARDGRPERRR. Disordered stretches follow at residues 1–123 and 154–198; these read MDAA…QDYL and QFPP…DDAA. Residues 10 to 30 carry the Nuclear localization signal motif; that stretch reads ERRRAVSGTYRTHPFQRPSAR. Residues 28 to 53 show a composition bias toward basic residues; sequence SARRSAGRPARCGRRGRGAPRVRRPR. The segment covering 62–87 has biased composition (acidic residues); sequence EDTSEDENVYDYIDGDSSDSADDYDS. A Nuclear export signal motif is present at residues 94–121; the sequence is RGPNHGAGDAMDTDAPPERAPEGGAPQD. The short motif at 483–493 is the Nuclear export signal element; the sequence is LSAYLTLFVAL.

The protein belongs to the alphaherpesvirinae HHV-1 UL47 family. Interacts with US3 kinase. Interacts with UL31 and UL34; these interactions seem important for efficient virion nuclear egress. Interacts with UL41/VHS. Interacts with host DDB1. Monoubiquitinated. Post-translationally, phosphorylated by US3. This phosphorylation is required for proper nuclear localization.

Its subcellular location is the virion tegument. It localises to the host nucleus. It is found in the host cytoplasm. Functionally, tegument protein that can bind to various RNA transcripts. Plays a role in the attenuation of selective viral and cellular mRNA degradation by modulating the activity of host shutoff RNase UL41/VHS. Also plays a role in the primary envelopment of virions in the perinuclear space, probably by interacting with two nuclear egress proteins UL31 and UL34. In Bovine herpesvirus 1.1 (strain Cooper) (BoHV-1), this protein is Tegument protein UL47.